The primary structure comprises 171 residues: RNA pyrophosphohydrolase (171 aa).

A Nudix hydrolase domain is found at 6-149; sequence GFRPNVGIIL…KREVYRRALK (144 aa). Residues 39–60 carry the Nudix box motif; it reads GGIKESESAEQALYRELQEEVG.

The protein belongs to the Nudix hydrolase family. RppH subfamily. A divalent metal cation is required as a cofactor.

Its function is as follows. Accelerates the degradation of transcripts by removing pyrophosphate from the 5'-end of triphosphorylated RNA, leading to a more labile monophosphorylated state that can stimulate subsequent ribonuclease cleavage. The protein is RNA pyrophosphohydrolase of Teredinibacter turnerae (strain ATCC 39867 / T7901).